The sequence spans 404 residues: 2,3-diketo-5-methylthiopentyl-1-phosphate enolase (404 aa).

Lys91 functions as the Proton acceptor in the catalytic mechanism. Substrate is bound by residues Lys140, 166 to 169 (KDDE), His257, Gly329, and 351 to 352 (GG). Mg(2+) contacts are provided by Lys166, Asp168, and Glu169. The residue at position 166 (Lys166) is an N6-carboxylysine.

Belongs to the RuBisCO large chain family. Type IV subfamily. In terms of assembly, homodimer. Mg(2+) is required as a cofactor.

The catalysed reaction is 5-methylsulfanyl-2,3-dioxopentyl phosphate = 2-hydroxy-5-methylsulfanyl-3-oxopent-1-enyl phosphate. It participates in amino-acid biosynthesis; L-methionine biosynthesis via salvage pathway; L-methionine from S-methyl-5-thio-alpha-D-ribose 1-phosphate: step 3/6. In terms of biological role, catalyzes the enolization of 2,3-diketo-5-methylthiopentyl-1-phosphate (DK-MTP-1-P) into 2-hydroxy-3-keto-5-methylthiopentenyl-1-phosphate (HK-MTPenyl-1-P). The polypeptide is 2,3-diketo-5-methylthiopentyl-1-phosphate enolase (Bacillus velezensis (strain DSM 23117 / BGSC 10A6 / LMG 26770 / FZB42) (Bacillus amyloliquefaciens subsp. plantarum)).